Reading from the N-terminus, the 333-residue chain is Ribosomal RNA small subunit methyltransferase C (333 aa).

The protein belongs to the methyltransferase superfamily. RsmC family. As to quaternary structure, monomer.

It is found in the cytoplasm. The enzyme catalyses guanosine(1207) in 16S rRNA + S-adenosyl-L-methionine = N(2)-methylguanosine(1207) in 16S rRNA + S-adenosyl-L-homocysteine + H(+). Specifically methylates the guanine in position 1207 of 16S rRNA in the 30S particle. The chain is Ribosomal RNA small subunit methyltransferase C from Mannheimia succiniciproducens (strain KCTC 0769BP / MBEL55E).